The chain runs to 274 residues: Thymidylate synthase (274 aa).

Position 21 (arginine 21) interacts with dUMP. A (6R)-5,10-methylene-5,6,7,8-tetrahydrofolate-binding site is contributed by histidine 51. 123–124 (RR) provides a ligand contact to dUMP. Residue cysteine 156 is the Nucleophile of the active site. DUMP contacts are provided by residues 176–179 (RSAD), asparagine 187, and 217–219 (HIY). Residue aspartate 179 participates in (6R)-5,10-methylene-5,6,7,8-tetrahydrofolate binding. Serine 273 lines the (6R)-5,10-methylene-5,6,7,8-tetrahydrofolate pocket.

This sequence belongs to the thymidylate synthase family. Bacterial-type ThyA subfamily. As to quaternary structure, homodimer.

It localises to the cytoplasm. It catalyses the reaction dUMP + (6R)-5,10-methylene-5,6,7,8-tetrahydrofolate = 7,8-dihydrofolate + dTMP. It participates in pyrimidine metabolism; dTTP biosynthesis. Functionally, catalyzes the reductive methylation of 2'-deoxyuridine-5'-monophosphate (dUMP) to 2'-deoxythymidine-5'-monophosphate (dTMP) while utilizing 5,10-methylenetetrahydrofolate (mTHF) as the methyl donor and reductant in the reaction, yielding dihydrofolate (DHF) as a by-product. This enzymatic reaction provides an intracellular de novo source of dTMP, an essential precursor for DNA biosynthesis. In Francisella tularensis subsp. tularensis (strain SCHU S4 / Schu 4), this protein is Thymidylate synthase.